The sequence spans 114 residues: Large ribosomal subunit protein uL22 (114 aa).

Belongs to the universal ribosomal protein uL22 family. Part of the 50S ribosomal subunit.

Its function is as follows. This protein binds specifically to 23S rRNA; its binding is stimulated by other ribosomal proteins, e.g. L4, L17, and L20. It is important during the early stages of 50S assembly. It makes multiple contacts with different domains of the 23S rRNA in the assembled 50S subunit and ribosome. The globular domain of the protein is located near the polypeptide exit tunnel on the outside of the subunit, while an extended beta-hairpin is found that lines the wall of the exit tunnel in the center of the 70S ribosome. This chain is Large ribosomal subunit protein uL22, found in Streptococcus pyogenes serotype M6 (strain ATCC BAA-946 / MGAS10394).